A 371-amino-acid chain; its full sequence is Phosphatase IMPL1, chloroplastic (371 aa).

A chloroplast-targeting transit peptide spans 1 to 60; that stretch reads MGRSLIFSGNMSLRISHLPRSSLPLQNPISGRTVNRTFRYRCTRILSNSFKSTTRLQTKA. Val-61 carries the N-acetylvaline modification. Residues Glu-148, Asp-165, Leu-167, and Asp-168 each coordinate Mg(2+). Glu-148 is a substrate binding site. Substrate contacts are provided by residues 167–170, 273–275, Glu-292, and Asp-299; these read LDGT and GAA. A Mg(2+)-binding site is contributed by Asp-299.

This sequence belongs to the inositol monophosphatase superfamily. It depends on Mg(2+) as a cofactor. As to expression, ubiquitous. Expressed in pistil and seed endosperm.

It is found in the plastid. The protein localises to the chloroplast stroma. The enzyme catalyses a myo-inositol phosphate + H2O = myo-inositol + phosphate. It participates in polyol metabolism; myo-inositol biosynthesis; myo-inositol from D-glucose 6-phosphate: step 2/2. Its function is as follows. Phosphatase acting preferentially on D-myoinositol 1-phosphate (D-Ins 1-P). This is Phosphatase IMPL1, chloroplastic (IMPL1) from Arabidopsis thaliana (Mouse-ear cress).